The chain runs to 402 residues: MFPMSSTSRSSAANNRKDPPRKKNKETPSPVTREPTSIDSLPNDLLLNCFARVSRMYYPALSRVSKRFRSIVTSPEIYNTRSLLNRTEKCLYLCLRFPFDNNTHWFTLYQNPNRTVSDKVFLQIPSPQYPLTLSSNLVAVGSNIYRIGGTVGDDSCPLGFDREPSSKVSILDCRSHTWRDGPRMRLNRRSSTTSVVDGKIYVTGGTEDTDNPSHWIEVFDPKTQSWGTVTNPHIVKVWEEVCYRRAVKSIGHDGKLYLSGDKYVVYDPDEGKWNSVEEHWLIGYAIGSSNCVVDNILFYWDQGVFKWYDSKVSSWKQLKGLEGLPDDFSQREYCKLVDLGGKMAVLWDKWEYSGVCMIFCAEISLEKRDGDEIWGKVEWFDTVLEVGASCSLKSADALSASV.

Low complexity predominate over residues 1–14 (MFPMSSTSRSSAAN). A disordered region spans residues 1 to 37 (MFPMSSTSRSSAANNRKDPPRKKNKETPSPVTREPTS). The span at 27–37 (TPSPVTREPTS) shows a compositional bias: polar residues. Positions 35–81 (PTSIDSLPNDLLLNCFARVSRMYYPALSRVSKRFRSIVTSPEIYNTR) constitute an F-box domain. Kelch repeat units lie at residues 143–198 (NIYR…VVDG), 199–246 (KIYV…YRRA), 255–300 (KLYL…LFYW), and 302–341 (QGVF…DLGG).

In Arabidopsis thaliana (Mouse-ear cress), this protein is F-box/kelch-repeat protein At4g39590.